A 308-amino-acid chain; its full sequence is Very-long-chain enoyl-CoA reductase (308 aa).

At 1–86 (MKHYEVEILD…YFRDLGAQIS (86 aa)) the chain is on the cytoplasmic side. Lysine 22 carries the N6-acetyllysine modification. Position 58 is a phosphoserine (serine 58). N6-acetyllysine is present on lysine 60. A helical transmembrane segment spans residues 87–106 (WVTVFLTEYAGPLFIYLLFY). The Lumenal segment spans residues 107–124 (FRVPFIYGRKYDFTSSRH). Residues 125–147 (TVVHLACICHSFHYIKRLLETLF) form a helical membrane-spanning segment. Residues 148–158 (VHRFSHGTMPL) lie on the Cytoplasmic side of the membrane. The helical transmembrane segment at 159 to 180 (RNIFKNCTYYWGFAAWMAYYIN) threads the bilayer. At 181–189 (HPLYTPPTY) the chain is on the lumenal side. The chain crosses the membrane as a helical span at residues 190–216 (GAQQVKLALAIFVICQLGNFSIHMALR). The Cytoplasmic segment spans residues 217 to 245 (DLRPAGSKTRKIPYPTRNPFTWLFLLVSC). The helical transmembrane segment at 246 to 262 (PNYTYEVGSWIGFAIMT) threads the bilayer. Residues 263–264 (QC) are Lumenal-facing. Residues 265–292 (LPVALFSLVGFTQMTIWAKGKHRSYLKE) form a helical membrane-spanning segment. Residues 293 to 308 (FRDYPPLRMPIIPFLL) are Cytoplasmic-facing.

It belongs to the steroid 5-alpha reductase family. As to quaternary structure, interacts with ELOVL1 and LASS2. In terms of processing, glycosylated.

Its subcellular location is the endoplasmic reticulum membrane. It catalyses the reaction a very-long-chain 2,3-saturated fatty acyl-CoA + NADP(+) = a very-long-chain (2E)-enoyl-CoA + NADPH + H(+). It carries out the reaction octadecanoyl-CoA + NADP(+) = (2E)-octadecenoyl-CoA + NADPH + H(+). The catalysed reaction is (2E,7Z,10Z,13Z,16Z)-docosapentaenoyl-CoA + NADPH + H(+) = (7Z,10Z,13Z,16Z)-docosatetraenoyl-CoA + NADP(+). The enzyme catalyses (2E,7Z,10Z,13Z,16Z,19Z)-docosahexaenoyl-CoA + NADPH + H(+) = (7Z,10Z,13Z,16Z,19Z)-docosapentaenoyl-CoA + NADP(+). It catalyses the reaction (2E,8Z,11Z,14Z)-eicosatetraenoyl-CoA + NADPH + H(+) = (8Z,11Z,14Z)-eicosatrienoyl-CoA + NADP(+). It carries out the reaction (2E)-hexadecenoyl-CoA + NADPH + H(+) = hexadecanoyl-CoA + NADP(+). It participates in lipid metabolism; fatty acid biosynthesis. The protein operates within lipid metabolism; sphingolipid metabolism. Functionally, involved in both the production of very long-chain fatty acids for sphingolipid synthesis and the degradation of the sphingosine moiety in sphingolipids through the sphingosine 1-phosphate metabolic pathway. Catalyzes the last of the four reactions of the long-chain fatty acids elongation cycle. This endoplasmic reticulum-bound enzymatic process, allows the addition of 2 carbons to the chain of long- and very long-chain fatty acids/VLCFAs per cycle. This enzyme reduces the trans-2,3-enoyl-CoA fatty acid intermediate to an acyl-CoA that can be further elongated by entering a new cycle of elongation. Thereby, it participates in the production of VLCFAs of different chain lengths that are involved in multiple biological processes as precursors of membrane lipids and lipid mediators. Catalyzes the saturation step of the sphingosine 1-phosphate metabolic pathway, the conversion of trans-2-hexadecenoyl-CoA to palmitoyl-CoA. This Bos taurus (Bovine) protein is Very-long-chain enoyl-CoA reductase (TECR).